Reading from the N-terminus, the 79-residue chain is Small ribosomal subunit protein bS18 (79 aa).

Belongs to the bacterial ribosomal protein bS18 family. In terms of assembly, part of the 30S ribosomal subunit. Forms a tight heterodimer with protein bS6.

In terms of biological role, binds as a heterodimer with protein bS6 to the central domain of the 16S rRNA, where it helps stabilize the platform of the 30S subunit. This is Small ribosomal subunit protein bS18 from Salinispora arenicola (strain CNS-205).